We begin with the raw amino-acid sequence, 670 residues long: Solute carrier organic anion transporter family member 1A1 (670 aa).

The Cytoplasmic portion of the chain corresponds to 1–20 (MEETEKKIATQEGRLFSKMK). Residues 21–40 (VFLLSLTCACLTKSLSGVYM) traverse the membrane as a helical segment. The Extracellular segment spans residues 41–59 (NSMLTQIERQFDISTSVAG). Residues 60-80 (LINGSFEIGNLFFIVFVSYFG) traverse the membrane as a helical segment. Residues 81–86 (TKLHRP) lie on the Cytoplasmic side of the membrane. Residues 87–111 (VVIGIGCVIMGLGCLLMSLPHFFMG) form a helical membrane-spanning segment. At 112–155 (RYEYETTISPTGNLSSNSFLCMENRTQTLKPTQDPAECVKEMKS) the chain is on the extracellular side. 2 N-linked (GlcNAc...) asparagine glycosylation sites follow: asparagine 124 and asparagine 135. A helical membrane pass occupies residues 156 to 184 (LMWICVMVGNIIRGIGETPIVPLGISYIE). Over 185 to 203 (DFAKSENSPLYIGILEMGK) the chain is Cytoplasmic. A helical membrane pass occupies residues 204–224 (VAGPIFGLLLGSYCAQIYVDI). Topologically, residues 225–242 (GSVNTDDLTITPSDTRWV) are extracellular. Residues 243-267 (GAWWIGFLVCAGVNILTSIPFFFLP) traverse the membrane as a helical segment. The Cytoplasmic portion of the chain corresponds to 268 to 311 (KALPKKGQQENVAVTKDGKVEKYGGQAREENLGITKDFLTFMKR). The helical transmembrane segment at 312–333 (LFCNPIYMLFILTSVLQVNGFI) threads the bilayer. The Extracellular portion of the chain corresponds to 334-353 (NKFTFLPKYLEQQYGKSTAE). The helical transmembrane segment at 354–377 (AIFLIGVYSLPPICLGYLIGGFIM) threads the bilayer. At 378–381 (KKFK) the chain is on the cytoplasmic side. Residues 382-405 (ITVKKAAYLAFCLSVFEYLLFLCH) traverse the membrane as a helical segment. Over 406 to 513 (FMLTCDNAAV…PECANRLQYF (108 aa)) the chain is Extracellular. The Kazal-like domain maps to 433 to 488 (SKVLADCNTRCSCSTNTWDPVCGDNGVAYMSACLAGCKKFVGTGTNMVFQDCSCIQ). Cystine bridges form between cysteine 439-cysteine 469, cysteine 445-cysteine 465, and cysteine 454-cysteine 486. N-linked (GlcNAc...) asparagine glycosylation is present at asparagine 492. A helical transmembrane segment spans residues 514–536 (LILTIIISFIYSLTAIPGYMVFL). The Cytoplasmic portion of the chain corresponds to 537-545 (RCVKSEEKS). The chain crosses the membrane as a helical span at residues 546–571 (LGVGLHTFCIRVFAGIPAPVYFGALI). The Extracellular segment spans residues 572–605 (DRTCLHWGTLKCGQRGACRMYDINSFRHIYLGLP). The chain crosses the membrane as a helical span at residues 606-623 (IALRGSSYLPAFFILILM). Over 624–670 (RKFQFPGDIDSSATDHTEMMLGEKESEHTDVHGSPQVENDGELKTKL) the chain is Cytoplasmic. A phosphoserine mark is found at serine 634 and serine 635. The segment covering 645-654 (GEKESEHTDV) has biased composition (basic and acidic residues). The tract at residues 645–670 (GEKESEHTDVHGSPQVENDGELKTKL) is disordered.

This sequence belongs to the organo anion transporter (TC 2.A.60) family. Binds to PDZK1. Interaction with PDZK1 is required for expression on hepatocyte surface. In terms of processing, glycosylated. As to expression, highly expressed in liver and kidney, and at lower levels in brain, lung, skeletal muscle and proximal colon.

It localises to the basolateral cell membrane. The enzyme catalyses estrone 3-sulfate(out) + hydrogencarbonate(in) = estrone 3-sulfate(in) + hydrogencarbonate(out). It catalyses the reaction taurocholate(out) + hydrogencarbonate(in) = taurocholate(in) + hydrogencarbonate(out). It carries out the reaction L-thyroxine(out) = L-thyroxine(in). The catalysed reaction is prostaglandin E2(out) = prostaglandin E2(in). The enzyme catalyses 17beta-estradiol 17-O-(beta-D-glucuronate)(out) = 17beta-estradiol 17-O-(beta-D-glucuronate)(in). It catalyses the reaction dehydroepiandrosterone 3-sulfate(out) = dehydroepiandrosterone 3-sulfate(in). Functionally, mediates the Na(+)-independent transport of organic anions such as steroid sulfate conjugates (dehydroepiandrosterone sulfate (DHEAS), 17-beta-glucuronosyl estradiol, estrone-3-sulfate), conjugated (taurocholate) and unconjugated (cholate) bile acids, prostaglandin E2 (PGE2) and L-thyroxine T4. Also capable of transporting sulfobromophthalein (BSP), ouabain and gadoxetate. Hydrogencarbonate/HCO3(-) acts as the probable counteranion that exchanges for organic anions. Shows a pH-sensitive substrate specificity which may be ascribed to the protonation state of the binding site and leads to a stimulation of substrate transport in an acidic microenvironment. In Rattus norvegicus (Rat), this protein is Solute carrier organic anion transporter family member 1A1.